The chain runs to 318 residues: Nucleotide-binding protein Lcho_3490 (318 aa).

35 to 42 (GISGGGKS) provides a ligand contact to ATP. 84-87 (DVRN) contributes to the GTP binding site.

Belongs to the RapZ-like family.

Functionally, displays ATPase and GTPase activities. This Leptothrix cholodnii (strain ATCC 51168 / LMG 8142 / SP-6) (Leptothrix discophora (strain SP-6)) protein is Nucleotide-binding protein Lcho_3490.